The primary structure comprises 318 residues: UDP-N-acetylenolpyruvoylglucosamine reductase (318 aa).

One can recognise an FAD-binding PCMH-type domain in the interval I38 to G204. R182 is a catalytic residue. The span at S212 to K229 shows a compositional bias: basic and acidic residues. The disordered stretch occupies residues S212–G232. Residue S233 is the Proton donor of the active site. E310 is an active-site residue.

The protein belongs to the MurB family. The cofactor is FAD.

The protein localises to the cytoplasm. The catalysed reaction is UDP-N-acetyl-alpha-D-muramate + NADP(+) = UDP-N-acetyl-3-O-(1-carboxyvinyl)-alpha-D-glucosamine + NADPH + H(+). It participates in cell wall biogenesis; peptidoglycan biosynthesis. Functionally, cell wall formation. This chain is UDP-N-acetylenolpyruvoylglucosamine reductase, found in Leptospira interrogans serogroup Icterohaemorrhagiae serovar copenhageni (strain Fiocruz L1-130).